The chain runs to 876 residues: MTLARFVLALMLGALPEVVGFDSVLNDSLHHSHRHSPPPGPHYPSYYLPTQQRPPRTRPPPPLPRFPRPPRALPAQRPHALQAGHTPRPHPWGCPAGEPWVSVTDFGARCLRWAEVPPFLERSPPASWAQLRGQRHNFCRSPDGAGRPWCFYGDARGKVDWGYCDCRHGSVRLRGGKNEFEGTVEVYASGVWGTVCSSHWDDSDASVICHQLQLGGKGIAKQTPFSGLGLIPVYWSNVRCRGDEENILLCEKDIWQGGVCPQKMAAAVTCSFSHGPTFPIIRLAGGSSVHEGRVELYHAGQWGTVCDDQWDDADAEVICRQLGLSGIAKAWHQAYFGEGSGPVMLDEVRCTGNELSIEQCPKSSWGEHNCGHKEDAGVSCTPLTDGVIRLAGGKGSHEGRLEVYYRGQWGTVCDDGWTELNTYVVCRQLGFKYGKQASANHFEESTGPIWLDDVSCSGKETRFLQCSRRQWGRHDCSHREDVSIACYPGGEGHRLSLGFPVRLMDGENKKEGRVEVFINGQWGTICDDGWTDKDAAVICRQLGYKGPARARTMAYFGEGKGPIHVDNVKCTGNERSLADCIKQDIGRHNCRHSEDAGVICDYFGKKASGNSNKESLSSVCGLRLLHRRQKRIIGGKNSLRGGWPWQVSLRLKSYHGDGRLLCGATLLSSCWVLTAAHCFKRYGNSTRNYAVRVGDYHTLVPEEFEEEIGVQQIVIHREYRPDSSDYDIALVRLQGPEEQCARFSSHVLPACLPLWRERPQKTASNCYITGWGDTGRAYSRTLQQAAIPLLPKRFCEERYKGRFTGRMLCAGNLHEHKRVDSCQGDSGGPLMCERPGESWVVYGVTSWGYGCGVKDSPGVYTKVSAFVPWIKSVTKL.

An N-terminal signal peptide occupies residues 1 to 20; it reads MTLARFVLALMLGALPEVVG. The N-linked (GlcNAc...) asparagine glycan is linked to asparagine 26. The segment at 29–89 is disordered; sequence LHHSHRHSPP…ALQAGHTPRP (61 aa). Low complexity predominate over residues 43–54; the sequence is YPSYYLPTQQRP. The span at 57 to 72 shows a compositional bias: pro residues; the sequence is TRPPPPLPRFPRPPRA. The Kringle domain occupies 94–166; that stretch reads CPAGEPWVSV…GKVDWGYCDC (73 aa). 20 cysteine pairs are disulfide-bonded: cysteine 94-cysteine 166, cysteine 110-cysteine 150, cysteine 139-cysteine 164, cysteine 196-cysteine 260, cysteine 209-cysteine 270, cysteine 240-cysteine 250, cysteine 306-cysteine 370, cysteine 319-cysteine 380, cysteine 350-cysteine 360, cysteine 413-cysteine 476, cysteine 426-cysteine 486, cysteine 456-cysteine 466, cysteine 526-cysteine 590, cysteine 539-cysteine 600, cysteine 570-cysteine 580, cysteine 620-cysteine 751, cysteine 662-cysteine 678, cysteine 766-cysteine 832, cysteine 795-cysteine 809, and cysteine 822-cysteine 851. 4 consecutive SRCR domains span residues 171–272, 281–382, 388–488, and 501–602; these read VRLR…TCSF, IRLA…SCTP, IRLA…ACYP, and VRLM…ICDY. Residues 620 to 631 form a zymogen activation region region; it reads CGLRLLHRRQKR. Positions 632–875 constitute a Peptidase S1 domain; it reads IIGGKNSLRG…FVPWIKSVTK (244 aa). Histidine 677 functions as the Charge relay system in the catalytic mechanism. Asparagine 684 carries an N-linked (GlcNAc...) asparagine glycan. Aspartate 727 serves as the catalytic Charge relay system. Serine 826 serves as the catalytic Charge relay system.

The protein belongs to the peptidase S1 family.

Its subcellular location is the secreted. Plays a role in neuronal plasticity and the proteolytic action may subserve structural reorganizations associated with learning and memory operations. This chain is Neurotrypsin (PRSS12), found in Gorilla gorilla gorilla (Western lowland gorilla).